The chain runs to 248 residues: Granulin (248 aa).

It belongs to the polyhedrin family.

Functionally, component of the virus occlusion bodies, which are large proteinaceous structures, that protect the virus from the outside environment for extended periods until they are ingested by insect larvae. The sequence is that of Granulin from Cydia pomonella (Codling moth).